The chain runs to 1140 residues: Eukaryotic translation initiation factor 3 subunit A (1140 aa).

The region spanning 319–502 (LQRMAAHVLL…NSIYFGTDLT (184 aa)) is the PCI domain. 3 stretches are compositionally biased toward basic and acidic residues: residues 589–624 (QNNA…EERE), 830–900 (AAEE…RGGD), and 921–984 (ERND…EPDS). Disordered regions lie at residues 589–632 (QNNA…QNEI) and 830–1140 (AAEE…VKRR). Over residues 987 to 998 (AAGAKDAGGAPA) the composition is skewed to low complexity. Composition is skewed to basic and acidic residues over residues 999 to 1050 (SRDD…EPQR), 1058 to 1086 (DAPR…RGDQ), and 1109 to 1130 (PRDE…KGGD).

This sequence belongs to the eIF-3 subunit A family. In terms of assembly, component of the eukaryotic translation initiation factor 3 (eIF-3) complex. The eIF-3 complex interacts with pix.

The protein resides in the cytoplasm. In terms of biological role, RNA-binding component of the eukaryotic translation initiation factor 3 (eIF-3) complex, which is involved in protein synthesis of a specialized repertoire of mRNAs and, together with other initiation factors, stimulates binding of mRNA and methionyl-tRNAi to the 40S ribosome. The eIF-3 complex specifically targets and initiates translation of a subset of mRNAs involved in cell proliferation. This is Eukaryotic translation initiation factor 3 subunit A from Drosophila ananassae (Fruit fly).